The sequence spans 102 residues: Small ribosomal subunit protein eS24 (102 aa).

This sequence belongs to the eukaryotic ribosomal protein eS24 family.

The chain is Small ribosomal subunit protein eS24 (rps24e) from Haloarcula marismortui (strain ATCC 43049 / DSM 3752 / JCM 8966 / VKM B-1809) (Halobacterium marismortui).